The following is a 993-amino-acid chain: Ephrin type-A receptor 7 (993 aa).

The N-terminal stretch at 1–27 is a signal peptide; sequence MVLRSRLPPWIMLCSVWLLRFAHTGEA. Topologically, residues 28 to 550 are extracellular; the sequence is QAAKEVILLD…TAVSSEQNPV (523 aa). The 179-residue stretch at 32–210 folds into the Eph LBD domain; sequence EVILLDSKAQ…YYKKCWSIIE (179 aa). 2 Fibronectin type-III domains span residues 331–441 and 442–537; these read PPSA…TGQA and APSQ…TLEE. 2 N-linked (GlcNAc...) asparagine glycosylation sites follow: N343 and N410. Residues 551 to 571 traverse the membrane as a helical segment; sequence IIIAVVAVAGTIILVFMVFGF. At 572–993 the chain is on the cytoplasmic side; the sequence is IIGRRHCGYS…LHLHGTGIQV (422 aa). A phosphotyrosine; by autocatalysis mark is found at Y603 and Y609. A Protein kinase domain is found at 628–889; the sequence is IKIERVIGAG…QIVGILDKMI (262 aa). ATP-binding positions include 634 to 642 and K660; that span reads IGAGEFGEV. D753 serves as the catalytic Proton acceptor. Phosphotyrosine; by autocatalysis is present on residues Y786 and Y935. The SAM domain occupies 918 to 982; it reads TTFCSVGEWL…MSSIQTMRAQ (65 aa). A PDZ-binding motif is present at residues 991–993; the sequence is IQV.

Belongs to the protein kinase superfamily. Tyr protein kinase family. Ephrin receptor subfamily. In terms of assembly, heterotetramer upon binding of the ligand. The heterotetramer is composed of an ephrin dimer and a receptor dimer. Oligomerization is probably required to induce biological responses. In terms of processing, phosphorylated.

The protein resides in the cell membrane. It catalyses the reaction L-tyrosyl-[protein] + ATP = O-phospho-L-tyrosyl-[protein] + ADP + H(+). Functionally, receptor tyrosine kinase which binds promiscuously GPI-anchored ephrin-A family ligands residing on adjacent cells, leading to contact-dependent bidirectional signaling into neighboring cells. The signaling pathway downstream of the receptor is referred to as forward signaling while the signaling pathway downstream of the ephrin ligand is referred to as reverse signaling. Among GPI-anchored ephrin-A ligands, EFNA5 is a cognate/functional ligand for EPHA7 and their interaction regulates brain development modulating cell-cell adhesion and repulsion. Has a repellent activity on axons and is for instance involved in the guidance of corticothalamic axons and in the proper topographic mapping of retinal axons to the colliculus. May also regulate brain development through a caspase(CASP3)-dependent proapoptotic activity. Forward signaling may result in activation of components of the ERK signaling pathway including MAP2K1, MAP2K2, MAPK1 and MAPK3 which are phosphorylated upon activation of EPHA7. The sequence is that of Ephrin type-A receptor 7 (EPHA7) from Gallus gallus (Chicken).